The chain runs to 208 residues: Probable GTP-binding protein EngB (208 aa).

The 174-residue stretch at 22–195 (GLPEIALAGR…WHSIEEIFIA (174 aa)) folds into the EngB-type G domain. Residues 30–37 (GRSNVGKS), 57–61 (GKTRT), 75–78 (DLPG), 142–145 (TKSD), and 174–176 (ISS) each bind GTP. Positions 37 and 59 each coordinate Mg(2+).

This sequence belongs to the TRAFAC class TrmE-Era-EngA-EngB-Septin-like GTPase superfamily. EngB GTPase family. Mg(2+) serves as cofactor.

Functionally, necessary for normal cell division and for the maintenance of normal septation. In Alkaliphilus oremlandii (strain OhILAs) (Clostridium oremlandii (strain OhILAs)), this protein is Probable GTP-binding protein EngB.